The sequence spans 465 residues: 3-isopropylmalate dehydratase large subunit (465 aa).

Residues C347, C407, and C410 each contribute to the [4Fe-4S] cluster site.

It belongs to the aconitase/IPM isomerase family. LeuC type 1 subfamily. In terms of assembly, heterodimer of LeuC and LeuD. [4Fe-4S] cluster is required as a cofactor.

The catalysed reaction is (2R,3S)-3-isopropylmalate = (2S)-2-isopropylmalate. The protein operates within amino-acid biosynthesis; L-leucine biosynthesis; L-leucine from 3-methyl-2-oxobutanoate: step 2/4. In terms of biological role, catalyzes the isomerization between 2-isopropylmalate and 3-isopropylmalate, via the formation of 2-isopropylmaleate. The chain is 3-isopropylmalate dehydratase large subunit from Aeromonas hydrophila subsp. hydrophila (strain ATCC 7966 / DSM 30187 / BCRC 13018 / CCUG 14551 / JCM 1027 / KCTC 2358 / NCIMB 9240 / NCTC 8049).